The sequence spans 1750 residues: Brefeldin A-inhibited guanine nucleotide-exchange protein 3 (1750 aa).

Ala-2 carries the N-acetylalanine modification. Disordered regions lie at residues 44–65 (LRSP…IPGP) and 565–596 (EEGS…SSGN). Residues 47 to 61 (PENSSPVADSESGSS) show a composition bias toward polar residues. Over residues 565 to 588 (EEGSHPVENGKGDGGHGGFERSDS) the composition is skewed to basic and acidic residues. The residue at position 586 (Ser-586) is a Phosphoserine. The SEC7 domain maps to 601-788 (AIEQRRAYKL…RALYERISRN (188 aa)). Residue Glu-703 is part of the active site. A Phosphoserine modification is found at Ser-1307.

Homodimer.

Its subcellular location is the cytoplasm. It localises to the cytosol. The protein resides in the membrane. Its activity is regulated as follows. Inhibited by brefeldin A. Activates the ARF proteins by exchanging bound GDP for free GTP. Plays a role in vesicular protein sorting. Involved both in the nuclear division phase and in the nuclear fusion phase. The sequence is that of Brefeldin A-inhibited guanine nucleotide-exchange protein 3 (BIG3) from Arabidopsis thaliana (Mouse-ear cress).